The following is a 294-amino-acid chain: Eukaryotic translation initiation factor 3 subunit G (294 aa).

Basic and acidic residues predominate over residues 1–22 (MQTFHHQDTGSEDFRQNTMDEK). Disordered regions lie at residues 1-42 (MQTF…DGTK) and 164-211 (GGMG…SDDD). Over residues 30-42 (STPQITQNADGTK) the composition is skewed to polar residues. Gly residues predominate over residues 193 to 205 (GPGGPGGPGGAAG). One can recognise an RRM domain in the interval 214–292 (LTLRVTNLSE…LIMKVDYSKK (79 aa)).

The protein belongs to the eIF-3 subunit G family. Component of the eukaryotic translation initiation factor 3 (eIF-3) complex.

The protein resides in the cytoplasm. RNA-binding component of the eukaryotic translation initiation factor 3 (eIF-3) complex, which is involved in protein synthesis of a specialized repertoire of mRNAs and, together with other initiation factors, stimulates binding of mRNA and methionyl-tRNAi to the 40S ribosome. The eIF-3 complex specifically targets and initiates translation of a subset of mRNAs involved in cell proliferation. This subunit can bind 18S rRNA. This chain is Eukaryotic translation initiation factor 3 subunit G, found in Yarrowia lipolytica (strain CLIB 122 / E 150) (Yeast).